The primary structure comprises 247 residues: MSGHSKWHNIQGRKNAQDAKRGKIFQKISRDLYQAAKAGDPDPDNNPQLRLVMDKARAANMPKQNIQRAIDKATGAGGANFEEITYEGYGPGGVAVMVFCLTDNKNRTAAAIRSAFTHSGGSLGATGSVSYMFNRQGLIEILRDGLDKDEDDMLMDALDAGADDMQATDDKFQIFTDPSAMTSVRDALQEQGYELETAEVTMIPENKTKVPADKVGQYQHLIDELEDNDDVADVYEAAFVEDADQGE.

The segment at 1 to 22 (MSGHSKWHNIQGRKNAQDAKRG) is disordered.

It belongs to the TACO1 family.

The protein localises to the cytoplasm. This chain is Probable transcriptional regulatory protein LAF_0541, found in Limosilactobacillus fermentum (strain NBRC 3956 / LMG 18251) (Lactobacillus fermentum).